Reading from the N-terminus, the 210-residue chain is Ribosomal RNA small subunit methyltransferase G (210 aa).

Residues leucine 78, 124–125 (IE), and arginine 138 contribute to the S-adenosyl-L-methionine site.

Belongs to the methyltransferase superfamily. RNA methyltransferase RsmG family.

It localises to the cytoplasm. It carries out the reaction guanosine(527) in 16S rRNA + S-adenosyl-L-methionine = N(7)-methylguanosine(527) in 16S rRNA + S-adenosyl-L-homocysteine. In terms of biological role, specifically methylates the N7 position of guanine in position 527 of 16S rRNA. In Bordetella bronchiseptica (strain ATCC BAA-588 / NCTC 13252 / RB50) (Alcaligenes bronchisepticus), this protein is Ribosomal RNA small subunit methyltransferase G.